Here is a 114-residue protein sequence, read N- to C-terminus: Large ribosomal subunit protein uL22 (114 aa).

The protein belongs to the universal ribosomal protein uL22 family. In terms of assembly, part of the 50S ribosomal subunit.

This protein binds specifically to 23S rRNA; its binding is stimulated by other ribosomal proteins, e.g. L4, L17, and L20. It is important during the early stages of 50S assembly. It makes multiple contacts with different domains of the 23S rRNA in the assembled 50S subunit and ribosome. Its function is as follows. The globular domain of the protein is located near the polypeptide exit tunnel on the outside of the subunit, while an extended beta-hairpin is found that lines the wall of the exit tunnel in the center of the 70S ribosome. The sequence is that of Large ribosomal subunit protein uL22 from Desulfitobacterium hafniense (strain DSM 10664 / DCB-2).